A 412-amino-acid chain; its full sequence is Probable tRNA sulfurtransferase (412 aa).

A disordered region spans residues 1–22 (MPDIFTDNTDKQDSDPSRQGFE). The 109-residue stretch at 82–190 (PRAAEAAADV…QNLAYVYLET (109 aa)) folds into the THUMP domain. Residues 208-209 (LM), Lys292, Gly314, and Gln323 contribute to the ATP site.

This sequence belongs to the ThiI family.

The protein resides in the cytoplasm. The enzyme catalyses [ThiI sulfur-carrier protein]-S-sulfanyl-L-cysteine + a uridine in tRNA + 2 reduced [2Fe-2S]-[ferredoxin] + ATP + H(+) = [ThiI sulfur-carrier protein]-L-cysteine + a 4-thiouridine in tRNA + 2 oxidized [2Fe-2S]-[ferredoxin] + AMP + diphosphate. It carries out the reaction [ThiS sulfur-carrier protein]-C-terminal Gly-Gly-AMP + S-sulfanyl-L-cysteinyl-[cysteine desulfurase] + AH2 = [ThiS sulfur-carrier protein]-C-terminal-Gly-aminoethanethioate + L-cysteinyl-[cysteine desulfurase] + A + AMP + 2 H(+). Its pathway is cofactor biosynthesis; thiamine diphosphate biosynthesis. Functionally, catalyzes the ATP-dependent transfer of a sulfur to tRNA to produce 4-thiouridine in position 8 of tRNAs, which functions as a near-UV photosensor. Also catalyzes the transfer of sulfur to the sulfur carrier protein ThiS, forming ThiS-thiocarboxylate. This is a step in the synthesis of thiazole, in the thiamine biosynthesis pathway. The sulfur is donated as persulfide by IscS. This chain is Probable tRNA sulfurtransferase, found in Methanosarcina acetivorans (strain ATCC 35395 / DSM 2834 / JCM 12185 / C2A).